We begin with the raw amino-acid sequence, 166 residues long: Regulatory protein RecX (166 aa).

Belongs to the RecX family.

The protein localises to the cytoplasm. Its function is as follows. Modulates RecA activity. The polypeptide is Regulatory protein RecX (Salmonella newport (strain SL254)).